The primary structure comprises 446 residues: Keratin, type I cytoskeletal 25 (446 aa).

The segment at 1-20 (MSLRLSSGSKRSYARPSTGS) is disordered. The tract at residues 1-74 (MSLRLSSGSK…VNEGGLLSGN (74 aa)) is head. A coil 1A region spans residues 75–110 (EKVTMQNLNDRLASYLDNVQALQEANADLEQKIKGW). Positions 75–390 (EKVTMQNLND…LLIGGDEGAC (316 aa)) constitute an IF rod domain. Positions 111–132 (YEKFGPGSCRGLDHDYSRYFPI) are linker 1. The tract at residues 133–224 (IDDLKNQIIT…KNHKEEMQAL (92 aa)) is coil 1B. The tract at residues 225–247 (QCAAGGNVNVEMNAAPGVDLTVL) is linker 12. The interval 248–386 (LNNMRAEYEA…ETYCLLIGGD (139 aa)) is coil 2. Residues 387–446 (EGACKSSSYKSKDYTSGNAGNQSKDSPKAIVVKKVLEEVDQRSKILTTRLHSLEEKSQSN) are tail. The interval 394–413 (SYKSKDYTSGNAGNQSKDSP) is disordered. Residues 400–410 (YTSGNAGNQSK) show a composition bias toward polar residues. Serine 438 carries the phosphoserine modification.

It belongs to the intermediate filament family. In terms of assembly, heterodimer of a type I and a type II keratin. Heterodimer with type II keratin KRT5 leading to the formation of keratin intermediate filament (KIF) network. Interacts with KRT6A to form filaments.

Its subcellular location is the cytoplasm. Functionally, essential for the proper assembly of type I and type II keratin protein complexes and formation of keratin intermediate filaments in the inner root sheath (irs). Plays a role in the cytoskeleton organization. The protein is Keratin, type I cytoskeletal 25 of Rattus norvegicus (Rat).